An 842-amino-acid polypeptide reads, in one-letter code: Amyloid-beta A4 precursor protein-binding family A member 1 (842 aa).

Disordered stretches follow at residues 1-121 (MNHL…DESA), 238-349 (RLHH…EKRD), and 366-439 (KTRT…KESR). Serine 82 bears the Phosphoserine mark. Composition is skewed to basic and acidic residues over residues 106-115 (DGYEAERAQD) and 240-258 (HHYD…KEAE). Phosphoserine is present on residues serine 246, serine 250, serine 252, serine 267, serine 284, and serine 289. Threonine 309 carries the post-translational modification Phosphothreonine. Serine 317 and serine 372 each carry phosphoserine. At threonine 375 the chain carries Phosphothreonine. Residues 392–403 (PTRDCDDQRPVD) are compositionally biased toward basic and acidic residues. Over residues 404–421 (GDSPSPGSSSPLGAESSS) the composition is skewed to low complexity. Residues serine 406, serine 408, serine 413, and serine 573 each carry the phosphoserine modification. Positions 460–648 (LIDGIIFAAN…LLNTQDMYND (189 aa)) constitute a PID domain. Positions 631-648 (LSQKEYSDLLNTQDMYND) are autoinhibitory helix linker. PDZ domains lie at 661–746 (DVFI…NIVR) and 752–828 (TVLI…MPAA).

Part of a multimeric complex containing STXBP1 and STX1A. Interacts with STXBP1. Component of the brain-specific heterotrimeric complex (LIN-10-LIN-2-LIN-7 complex) composed of at least APBA1, CASK, and LIN7, which associates with the motor protein KIF17 to transport vesicles along microtubules. Within the complex, interacts (via PDZ domain) with the motor protein KIF17; the interaction is direct and is required for association of KIF17 with the cargo that is to be transported. Binds to the cytoplasmic domain of amyloid protein (APP). Interacts (via PDZ 1 and 2 domains) with FSPB. Isoform 3 interacts (via its truncated PID domain) with active, GTP-bound RAB6A. Also interacts with GTP-bound RAB6B. In terms of tissue distribution, isoform 3 is expressed in brain.

Its subcellular location is the cytoplasm. The protein localises to the perinuclear region. The protein resides in the nucleus. It localises to the golgi apparatus. Putative function in synaptic vesicle exocytosis by binding to Munc18-1, an essential component of the synaptic vesicle exocytotic machinery. May modulate processing of the amyloid-beta precursor protein (APP) and hence formation of AAP-beta. Component of the LIN-10-LIN-2-LIN-7 complex, which associates with the motor protein KIF17 to transport vesicles containing N-methyl-D-aspartate (NMDA) receptor subunit NR2B along microtubules. In Mus musculus (Mouse), this protein is Amyloid-beta A4 precursor protein-binding family A member 1.